The following is a 314-amino-acid chain: tRNA uridine(34) hydroxylase (314 aa).

Positions Ala-140 to Ser-234 constitute a Rhodanese domain. The Cysteine persulfide intermediate role is filled by Cys-194.

The protein belongs to the TrhO family.

The enzyme catalyses uridine(34) in tRNA + AH2 + O2 = 5-hydroxyuridine(34) in tRNA + A + H2O. Functionally, catalyzes oxygen-dependent 5-hydroxyuridine (ho5U) modification at position 34 in tRNAs. This chain is tRNA uridine(34) hydroxylase, found in Acinetobacter baumannii (strain AYE).